The sequence spans 390 residues: Neuromedin-B receptor (390 aa).

Topologically, residues 1-41 (MPPRSLSNLSFPTEANESELVPEVWEKDFLPDSDGTTAELV) are extracellular. 2 N-linked (GlcNAc...) asparagine glycosylation sites follow: N8 and N16. The helical transmembrane segment at 42 to 65 (IRCVIPSLYLIIISVGLLGNIMLV) threads the bilayer. The Cytoplasmic portion of the chain corresponds to 66-79 (KIFLTNSAMRNVPN). A helical transmembrane segment spans residues 80–99 (IFISNLAAGDLLLLLTCVPV). Over 100–117 (DASRYFFDEWVFGKLGCK) the chain is Extracellular. An intrachain disulfide couples C116 to C198. A helical membrane pass occupies residues 118–139 (LIPAIQLTSVGVSVFTLTALSA). Residues 140-156 (DRYRAIVNPMDMQTSGV) lie on the Cytoplasmic side of the membrane. Residues 157-177 (LLWTSLKAVGIWVVSVLLAVP) form a helical membrane-spanning segment. Residues 178–211 (EAVFSEVARIGSLDNSSFTACIPYPQTDELHPKI) are Extracellular-facing. Residue N192 is glycosylated (N-linked (GlcNAc...) asparagine). Residues 212 to 235 (HSVLIFLVYFLIPLVIISIYYYHI) form a helical membrane-spanning segment. At 236–266 (AKTLIKSAHNLPGEYNEHTKKQMETRKRLAK) the chain is on the cytoplasmic side. The helical transmembrane segment at 267-287 (IVLVFVGCFVFCWFPNHVLYL) threads the bilayer. At 288 to 299 (YRSFNYKEIDPS) the chain is on the extracellular side. A helical membrane pass occupies residues 300–327 (LGHMIVTLVARVLSFSNSCVNPFALYLL). Residues 328–390 (SESFRKHFNS…GHSTKQEIAL (63 aa)) lie on the Cytoplasmic side of the membrane. A lipid anchor (S-palmitoyl cysteine) is attached at C341. The residue at position 352 (S352) is a Phosphoserine.

It belongs to the G-protein coupled receptor 1 family. Expressed in a subset of neurons of the pre-Botzinger complex. Within the pre-Botzinger complex, there is some overlap with neurons expressing Grpr with some cells expressing only Grpr or Nmbr while some cells express both. Expressed in dorsal root ganglion neurons and mast cells. Expressed in lung.

Its subcellular location is the cell membrane. Its function is as follows. Receptor for neuromedin-B. Contributes to the maintenance of basal sigh rate through signaling in the pre-Botzinger complex, a cluster of several thousand neurons in the ventrolateral medulla responsible for inspiration during respiratory activity. Contributes to the induction of sneezing following exposure to chemical irritants or allergens which causes release of NMB by nasal sensory neurons and activation of NMBR-expressing neurons in the sneeze-evoking region of the brainstem. These in turn activate neurons of the caudal ventral respiratory group, giving rise to the sneezing response. Contributes to induction of acute itch, possibly through its activation on dorsal root ganglion neurons by the NMB peptide. Plays a role in the innate immune response to influenza A virus infection by enhancing interferon alpha expression and reducing expression of IL6. Plays a role in CSF1-induced proliferation of osteoclast precursors by contributing to the positive regulation of the expression of the CSF1 receptor CSF1R. This chain is Neuromedin-B receptor (Nmbr), found in Mus musculus (Mouse).